The primary structure comprises 1711 residues: Hybrid PKS-NRPS synthetase TAS1 (1711 aa).

A condensation (C) domain region spans residues 43–397 (APLSKMQRAL…RNGLNSEHRV (355 aa)). Residues 506–907 (QQQATLRPEQ…TVLLYGRINN (402 aa)) are adenylation (A) domain. The Carrier 1 domain maps to 1043–1119 (LEWAAAKARI…SQVGLVQSRR (77 aa)). Ser-1079 is modified (O-(pantetheine 4'-phosphoryl)serine). A compositionally biased stretch (polar residues) spans 1114–1127 (LVQSRRGSSGSPRT). Positions 1114–1159 (LVQSRRGSSGSPRTVRSHARPQRKAKTPPRQARPETPESDYDQLPD) are disordered. Positions 1128–1140 (VRSHARPQRKAKT) are enriched in basic residues. The region spanning 1159–1236 (DLRDDVQQSI…AQVELLGRFT (78 aa)) is the Carrier 2 domain. Position 1195 is an O-(pantetheine 4'-phosphoryl)serine (Ser-1195). The Ketosynthase family 3 (KS3) domain occupies 1266 to 1683 (REQYAIVGMS…GSTAHVVLSA (418 aa)). Residues Cys-1429, His-1565, and Asn-1608 each act as for beta-ketoacyl synthase activity in the active site.

The protein in the N-terminal section; belongs to the NRP synthetase family. Requires pantetheine 4'-phosphate as cofactor.

The catalysed reaction is acetoacetyl-CoA + L-isoleucine + ATP = tenuazonic acid + AMP + diphosphate + CoA + 2 H(+). Hybrid PKS-NRPS synthetase that mediates the biosynthesis of the toxin tenuazonic acid (TeA), an inhibitor of protein biosynthesis on ribosomes by suppressing the release of new protein. TAS1 alone is sufficient for TeA synthesis via the condensation of isoleucine (Ile) with acetoacetyl-CoA by the N-terminal NRPS module and subsequent cyclization conducted by the C-terminal KS domain. This is Hybrid PKS-NRPS synthetase TAS1 from Botryobasidium botryosum (strain FD-172 SS1).